A 27-amino-acid chain; its full sequence is Trypsin inhibitor 5 (27 aa).

3 disulfides stabilise this stretch: cysteine 1–cysteine 18, cysteine 8–cysteine 20, and cysteine 14–cysteine 26.

The protein resides in the secreted. Its function is as follows. Inhibits trypsin. This is Trypsin inhibitor 5 from Sechium edule (Chayote).